A 272-amino-acid polypeptide reads, in one-letter code: MNQYAVWGNPIAQSKSPRIHTLFGQQTGKAISYVAKLGDEQQFEQQLKQFFAEGAKGANITAPFKERAFALADLYSESCLQAEACNTLKRLDDGRLYADNTDGVGLVSDLARLGWPKPHQRILILGAGGATKGVLYPLLQAQQQITIYNRTADKAASLAKKFAKFGQIQSACFDELPEQSFDLIINATSLGLQGKCVELPARLLTQANIYDMQYAPNMQTPFLEYARSQGATQYQDGLGMLVGQAAYTFQLWEDVLPDVEPILKQIKQEMEF.

Residues S14–S16 and T61 contribute to the shikimate site. The active-site Proton acceptor is the K65. An NADP(+)-binding site is contributed by E77. Residues N86 and D102 each coordinate shikimate. Residues G126 to A130, N149 to K154, and M212 each bind NADP(+). Residue Y214 participates in shikimate binding. G237 is a binding site for NADP(+).

Belongs to the shikimate dehydrogenase family. As to quaternary structure, homodimer.

The enzyme catalyses shikimate + NADP(+) = 3-dehydroshikimate + NADPH + H(+). Its pathway is metabolic intermediate biosynthesis; chorismate biosynthesis; chorismate from D-erythrose 4-phosphate and phosphoenolpyruvate: step 4/7. Involved in the biosynthesis of the chorismate, which leads to the biosynthesis of aromatic amino acids. Catalyzes the reversible NADPH linked reduction of 3-dehydroshikimate (DHSA) to yield shikimate (SA). The polypeptide is Shikimate dehydrogenase (NADP(+)) (Glaesserella parasuis serovar 5 (strain SH0165) (Haemophilus parasuis)).